The primary structure comprises 499 residues: Endosomal/lysosomal proton channel TMEM175 (499 aa).

The Cytoplasmic segment spans residues 1 to 30 (MSRLQTEEQAVDSEGDSSLHRRNEEGTQSS). The tract at residues 1 to 30 (MSRLQTEEQAVDSEGDSSLHRRNEEGTQSS) is disordered. Thr6 carries the phosphothreonine modification. Residues 31–53 (HRMLGFSDALLSIIATVMILPVT) traverse the membrane as a helical segment. The RxxxFSD motif 1 signature appears at 32-38 (RMLGFSD). At 54-74 (HTEISPEQQFDKSIQKLLATR) the chain is on the lumenal side. The segment at 55–60 (TEISPE) is short helix H1-1. The interval 62 to 68 (QFDKSIQ) is short helix H2-1. Residues 75-97 (IAVYLMTFLIVTVAWTAHTRLFQ) traverse the membrane as a helical segment. Residues 98 to 103 (VVGKID) lie on the Cytoplasmic side of the membrane. A helical membrane pass occupies residues 104–125 (DTLALLNLACMMTITLLPYTFS). At 126-135 (LMVTFPDVPL) the chain is on the lumenal side. The helical transmembrane segment at 136 to 157 (GIFLFCVCVIAIGSVQAMIVGY) threads the bilayer. At 158–181 (AFHFPHLLNPQIQCSTHRDLSRRH) the chain is on the cytoplasmic side. A helical transmembrane segment spans residues 182 to 202 (ILHLVLRGPALCFVAAVFSLF). Topologically, residues 203 to 207 (FFPLS) are lumenal. Residues 208–227 (YLLMVTVIFLPHISKATTWC) form a helical membrane-spanning segment. At 228–254 (KDKLMGQRESPAHDMEPFSIDLHAPLS) the chain is on the cytoplasmic side. A helical membrane pass occupies residues 255–279 (KERVEAFSDGVYAIVATLLILDICE). The short motif at 257–263 (RVEAFSD) is the RxxxFSD motif 2 element. Over 280 to 306 (DNVPDPKDVQEKFSGSLVAALGAYGPQ) the chain is Lumenal. A short helix H1-2 region spans residues 285-293 (PKDVQEKFS). The short helix H2-2 stretch occupies residues 295–301 (SLVAALG). Residues 307 to 329 (FLAYFGSFATVGLLWFAHHSLFL) form a helical membrane-spanning segment. At 330 to 335 (HVRKAT) the chain is on the cytoplasmic side. The helical transmembrane segment at 336-357 (QTMGLLNILSLAFVGGLPLAYQ) threads the bilayer. Residues 358–372 (QTSAFARQPHDELER) are Lumenal-facing. A helical transmembrane segment spans residues 373-393 (VRVSCAIIFFASIFQFAIWTT). At 394–413 (ALLHQTETLQPAVQFGGQEH) the chain is on the cytoplasmic side. Residues 414-437 (AFMFAKLALYPCASLLAFAATCLL) form a helical membrane-spanning segment. At 438–439 (SR) the chain is on the lumenal side. The helical transmembrane segment at 440–466 (FSTAIFHLMQISVPFAFLLLRLLVRLA) threads the bilayer. Residues 467-499 (LAGLQVLRGLWPHHPQQDQSEPEAQSQLLPDPC) lie on the Cytoplasmic side of the membrane.

It belongs to the TMEM175 family. In terms of assembly, homodimer. Interacts with AKT (AKT1, AKT2 or AKT3); leading to formation of the lysoK(GF) complex, which activates the channel. Interacts with LAMP1; inhibiting the proton channel activity of TMEM175. Interacts with LAMP2; inhibiting the proton channel activity of TMEM175.

Its subcellular location is the endosome membrane. It localises to the lysosome membrane. The catalysed reaction is H(+)(in) = H(+)(out). The enzyme catalyses K(+)(in) = K(+)(out). With respect to regulation, active at low pH (under pH 4.6): proton channel activity is activated by luminal side protons. Polyunsaturated fatty acids, such as arachidonic acid, also activate the channel activity. Proton channel activity is directly inhibited by LAMP1 or LAMP2, facilitating lysosomal acidification. Channel activity is activated following interaction with AKT (AKT1, AKT2 or AKT3): interaction promotes activation from closed to an open state. Activation by AKT is independent of AKT serine/threonine-protein kinase activity. Functionally, proton-activated proton channel that catalyzes proton efflux from endosomes and lysosomes to maintain a steady-state pH. Activated at low pH (under pH 4.6) by luminal side protons: selectively mediates lysosomal proton release from lysosomes, eliciting a proton leak that balances V-ATPase activity to maintain pH homeostasis. Regulation of lumenal pH stability is required for autophagosome-lysosome fusion. Also acts as a potassium channel at higher pH, regulating potassium conductance in endosomes and lysosomes. Constitutes the pore-forming subunit of the lysoK(GF) complex, a complex activated by extracellular growth factors. The lysoK(GF) complex is composed of TMEM175 and AKT (AKT1, AKT2 or AKT3), a major target of growth factor receptors: in the complex, TMEM175 channel is opened by conformational changes by AKT, leading to its activation. The lysoK(GF) complex is required to protect neurons against stress-induced damage. This Mus musculus (Mouse) protein is Endosomal/lysosomal proton channel TMEM175.